Reading from the N-terminus, the 291-residue chain is Glycolipid transfer protein domain-containing protein 2 (291 aa).

A glycan (N-linked (GlcNAc...) asparagine) is linked at N276.

It belongs to the GLTP family.

In Homo sapiens (Human), this protein is Glycolipid transfer protein domain-containing protein 2 (GLTPD2).